The following is a 412-amino-acid chain: Short-chain specific acyl-CoA dehydrogenase, mitochondrial (412 aa).

The transit peptide at 1–24 (MAAALLARAGGSLGRALRARDWRR) directs the protein to the mitochondrion. At Thr27 the chain carries Phosphothreonine. Lys51 is modified (N6-acetyllysine; alternate). An N6-succinyllysine; alternate modification is found at Lys51. Lys72 is modified (N6-acetyllysine). Residue Lys129 is modified to N6-acetyllysine; alternate. Lys129 carries the post-translational modification N6-succinyllysine; alternate. FAD-binding positions include 152–161 (FALSEPGNGS) and 185–187 (WIT). Ser161 contributes to the substrate binding site. Residue Lys208 is modified to N6-acetyllysine. Lys262 bears the N6-acetyllysine; alternate mark. Lys262 is modified (N6-succinyllysine; alternate). 269 to 272 (DMGR) lines the substrate pocket. Position 292 is an N6-acetyllysine (Lys292). Arg297 contacts FAD. Lys306 carries the N6-acetyllysine; alternate modification. Lys306 carries the post-translational modification N6-succinyllysine; alternate. 365-369 (QILGG) is an FAD binding site. Catalysis depends on Glu392, which acts as the Proton acceptor. 394–396 (TSE) is a binding site for FAD.

This sequence belongs to the acyl-CoA dehydrogenase family. As to quaternary structure, homotetramer. FAD is required as a cofactor.

It localises to the mitochondrion matrix. It catalyses the reaction a short-chain 2,3-saturated fatty acyl-CoA + oxidized [electron-transfer flavoprotein] + H(+) = a short-chain (2E)-enoyl-CoA + reduced [electron-transfer flavoprotein]. The enzyme catalyses butanoyl-CoA + oxidized [electron-transfer flavoprotein] + H(+) = (2E)-butenoyl-CoA + reduced [electron-transfer flavoprotein]. It carries out the reaction pentanoyl-CoA + oxidized [electron-transfer flavoprotein] + H(+) = (2E)-pentenoyl-CoA + reduced [electron-transfer flavoprotein]. The catalysed reaction is hexanoyl-CoA + oxidized [electron-transfer flavoprotein] + H(+) = (2E)-hexenoyl-CoA + reduced [electron-transfer flavoprotein]. It functions in the pathway lipid metabolism; mitochondrial fatty acid beta-oxidation. In terms of biological role, short-chain specific acyl-CoA dehydrogenase is one of the acyl-CoA dehydrogenases that catalyze the first step of mitochondrial fatty acid beta-oxidation, an aerobic process breaking down fatty acids into acetyl-CoA and allowing the production of energy from fats. The first step of fatty acid beta-oxidation consists in the removal of one hydrogen from C-2 and C-3 of the straight-chain fatty acyl-CoA thioester, resulting in the formation of trans-2-enoyl-CoA. Among the different mitochondrial acyl-CoA dehydrogenases, short-chain specific acyl-CoA dehydrogenase acts specifically on acyl-CoAs with saturated 4 to 6 carbons long primary chains. The chain is Short-chain specific acyl-CoA dehydrogenase, mitochondrial (Acads) from Rattus norvegicus (Rat).